The chain runs to 369 residues: tRNA 2-selenouridine synthase (369 aa).

One can recognise a Rhodanese domain in the interval 12–136; the sequence is FLDDIPLMDV…LRNFLFETTR (125 aa). The active-site S-selanylcysteine intermediate is the Cys-95.

It belongs to the SelU family. In terms of assembly, monomer.

The enzyme catalyses 5-methylaminomethyl-2-thiouridine(34) in tRNA + selenophosphate + (2E)-geranyl diphosphate + H2O + H(+) = 5-methylaminomethyl-2-selenouridine(34) in tRNA + (2E)-thiogeraniol + phosphate + diphosphate. The catalysed reaction is 5-methylaminomethyl-2-thiouridine(34) in tRNA + (2E)-geranyl diphosphate = 5-methylaminomethyl-S-(2E)-geranyl-thiouridine(34) in tRNA + diphosphate. It catalyses the reaction 5-methylaminomethyl-S-(2E)-geranyl-thiouridine(34) in tRNA + selenophosphate + H(+) = 5-methylaminomethyl-2-(Se-phospho)selenouridine(34) in tRNA + (2E)-thiogeraniol. It carries out the reaction 5-methylaminomethyl-2-(Se-phospho)selenouridine(34) in tRNA + H2O = 5-methylaminomethyl-2-selenouridine(34) in tRNA + phosphate. Its function is as follows. Involved in the post-transcriptional modification of the uridine at the wobble position (U34) of tRNA(Lys), tRNA(Glu) and tRNA(Gln). Catalyzes the conversion of 2-thiouridine (S2U-RNA) to 2-selenouridine (Se2U-RNA). Acts in a two-step process involving geranylation of 2-thiouridine (S2U) to S-geranyl-2-thiouridine (geS2U) and subsequent selenation of the latter derivative to 2-selenouridine (Se2U) in the tRNA chain. In Pseudomonas aeruginosa (strain LESB58), this protein is tRNA 2-selenouridine synthase.